Reading from the N-terminus, the 153-residue chain is Ribonuclease H (153 aa).

The RNase H type-1 domain occupies 4–145; that stretch reads SVDSVELFTD…ADQLANRGVD (142 aa). Residues Asp-13, Glu-51, Asp-73, and Asp-137 each contribute to the Mg(2+) site.

Belongs to the RNase H family. In terms of assembly, monomer. Mg(2+) is required as a cofactor.

It localises to the cytoplasm. It catalyses the reaction Endonucleolytic cleavage to 5'-phosphomonoester.. In terms of biological role, endonuclease that specifically degrades the RNA of RNA-DNA hybrids. The polypeptide is Ribonuclease H (Pseudomonas fluorescens (strain Pf0-1)).